A 1372-amino-acid chain; its full sequence is Polysaccharide lyase 8 family protein HylA (1372 aa).

An N-terminal signal peptide occupies residues 1–25; that stretch reads MIKKIIVVVAFMLTGFSLTAMSASA. One can recognise an F5/8 type C domain in the interval 63–172; that stretch reads DGDETTRWSA…SIISFEAYEK (110 aa). Residues 183–242 enclose the BIG2 domain; that stretch reads TENLTISEKRKQQLAFEVSPAGVDITEDQIEWSSSDPTIVTVDQTGNLTAVKSGEAKVTV. Residues histidine 487, tyrosine 496, and arginine 550 contribute to the active site. FIVAR domains lie at 1014–1075, 1084–1146, 1155–1217, and 1226–1288; these read KEAL…VKQL, DKTN…VKQL, and DKTN…VKRL. Residues 1288–1336 form a disordered region; it reads LTLKNSGENKKEQKNGGNNGHLNTSTGVDQTGTKQVKPSSQGGFRKASQ. Residues 1308–1329 are compositionally biased toward polar residues; the sequence is HLNTSTGVDQTGTKQVKPSSQG. Residues 1338 to 1342 carry the LPXTG sorting signal motif; sequence LPSTG. Threonine 1341 is modified (pentaglycyl murein peptidoglycan amidated threonine). A propeptide spans 1342 to 1372 (removed by sortase); that stretch reads GEKKSIALVIIGLLVIASGCLLVFRKSKSKK.

The protein belongs to the polysaccharide lyase 8 family.

Its subcellular location is the secreted. It is found in the cell wall. Its function is as follows. Has a very modest degradation activity against heparin sodium salt (HS) in vitro. Involved in the pathogenesis of vancomycin-resistant E.faecalis infections. The chain is Polysaccharide lyase 8 family protein HylA from Enterococcus faecalis (strain ATCC 700802 / V583).